A 269-amino-acid polypeptide reads, in one-letter code: Shikimate dehydrogenase (NADP(+)) (269 aa).

Shikimate is bound by residues 15–17 and Thr62; that span reads SLS. The Proton acceptor role is filled by Lys66. Asn86 and Asp100 together coordinate shikimate. NADP(+)-binding positions include 124–128, 147–152, and Ile211; these read GAGGA and NRTPER. Tyr213 is a binding site for shikimate. Gly234 contacts NADP(+).

This sequence belongs to the shikimate dehydrogenase family. As to quaternary structure, homodimer.

It carries out the reaction shikimate + NADP(+) = 3-dehydroshikimate + NADPH + H(+). The protein operates within metabolic intermediate biosynthesis; chorismate biosynthesis; chorismate from D-erythrose 4-phosphate and phosphoenolpyruvate: step 4/7. Its function is as follows. Involved in the biosynthesis of the chorismate, which leads to the biosynthesis of aromatic amino acids. Catalyzes the reversible NADPH linked reduction of 3-dehydroshikimate (DHSA) to yield shikimate (SA). The chain is Shikimate dehydrogenase (NADP(+)) from Methanococcoides burtonii (strain DSM 6242 / NBRC 107633 / OCM 468 / ACE-M).